The following is a 101-amino-acid chain: uncharacterized protein (101 aa).

Residues 1–21 (MKLSTCCAALLLALASPAVLA) form the signal peptide. The segment covering 79–94 (RTTSGNVSAPAQSSQD) has biased composition (polar residues). Positions 79–101 (RTTSGNVSAPAQSSQDGAPAEPQ) are disordered.

This is an uncharacterized protein from Escherichia coli (strain K12).